We begin with the raw amino-acid sequence, 369 residues long: MRDNTQHYRELFLEDTPLMDVRAPVEYHKGAFPHTVNRPLMNDIERQKVGTSYKQHGQQAAIALGHELVCGAVKAERLAAWKAFAEANPNGYLYCFRGGLRSQIVQQWLKQDAGIDYPRVIGGYKALRNFLFETTRAAVDECDFVLVGGLTGCGKTEVIAALDNSLDLEGHANHRGSSFGRRATPQPAQIDFENRLAIDILKKRHRGVGQFVLEDEGRIVGSCSLPLELYQGMQGYPLVWLEDGFEQRVARILKDYVIDLRSEFERVVGAEEGFAVFSAYLQKSLAGIVKRLGGERYQRLAAILVQALEEQGRDGSVETHRGWIEGLLKEYYDPMYAFQRQSKEDRVEFRGNQAEVIAYLRQRQALRPS.

The region spanning phenylalanine 12–arginine 136 is the Rhodanese domain. Cysteine 95 functions as the S-selanylcysteine intermediate in the catalytic mechanism.

The protein belongs to the SelU family. As to quaternary structure, monomer.

The enzyme catalyses 5-methylaminomethyl-2-thiouridine(34) in tRNA + selenophosphate + (2E)-geranyl diphosphate + H2O + H(+) = 5-methylaminomethyl-2-selenouridine(34) in tRNA + (2E)-thiogeraniol + phosphate + diphosphate. It catalyses the reaction 5-methylaminomethyl-2-thiouridine(34) in tRNA + (2E)-geranyl diphosphate = 5-methylaminomethyl-S-(2E)-geranyl-thiouridine(34) in tRNA + diphosphate. It carries out the reaction 5-methylaminomethyl-S-(2E)-geranyl-thiouridine(34) in tRNA + selenophosphate + H(+) = 5-methylaminomethyl-2-(Se-phospho)selenouridine(34) in tRNA + (2E)-thiogeraniol. The catalysed reaction is 5-methylaminomethyl-2-(Se-phospho)selenouridine(34) in tRNA + H2O = 5-methylaminomethyl-2-selenouridine(34) in tRNA + phosphate. Functionally, involved in the post-transcriptional modification of the uridine at the wobble position (U34) of tRNA(Lys), tRNA(Glu) and tRNA(Gln). Catalyzes the conversion of 2-thiouridine (S2U-RNA) to 2-selenouridine (Se2U-RNA). Acts in a two-step process involving geranylation of 2-thiouridine (S2U) to S-geranyl-2-thiouridine (geS2U) and subsequent selenation of the latter derivative to 2-selenouridine (Se2U) in the tRNA chain. In Pseudomonas paraeruginosa (strain DSM 24068 / PA7) (Pseudomonas aeruginosa (strain PA7)), this protein is tRNA 2-selenouridine synthase.